Consider the following 282-residue polypeptide: Uracil-DNA glycosylase (282 aa).

The disordered stretch occupies residues 15 to 40 (SAASKRKSASNTENIPEKVPAGNENQ). Residue Asp123 is the Proton acceptor of the active site.

The protein belongs to the uracil-DNA glycosylase (UDG) superfamily. UNG family.

Its subcellular location is the mitochondrion. It is found in the nucleus. It catalyses the reaction Hydrolyzes single-stranded DNA or mismatched double-stranded DNA and polynucleotides, releasing free uracil.. Inhibited by UGI, a B.subtilis bacteriophage PBS2 peptide inhibitor. Excises uracil residues from the DNA which can arise as a result of misincorporation of dUMP residues by DNA polymerase or due to deamination of cytosine. This Caenorhabditis elegans protein is Uracil-DNA glycosylase.